The primary structure comprises 760 residues: RxLR effector protein PSR2 (760 aa).

The first 21 residues, 1-21 (MGCRYAVLALAVAYFAGSIAA), serve as a signal peptide directing secretion. The RxLR-dEER motif lies at 47–62 (RFLRAANTADERNEDR). Residues 87-134 (PLLSWFEKKKSPDYVFLKLKINKGKQQLFDHPDWNVWVQYTTSVVKSD) form a WY1 repeat. A 7 X 93 AA tandem repeats region spans residues 87–760 (PLLSWFEKKK…TTKYMERYGQ (674 aa)). Residues 135–221 (PEEAMIAALR…MKLYNSKPVN (87 aa)) form an LWY2 repeat. The LWY3 repeat unit spans residues 222–312 (KKQQVTLVSM…KYVDNYNRDF (91 aa)). An LWY4 repeat occupies 313-403 (PDEATTVMAT…KYVEDLNLKP (91 aa)). The stretch at 404-496 (EHNDLQVSII…KFLEHYYKSF (93 aa)) is one LWY5 repeat. The stretch at 497–584 (PTPMMSALAK…RYLDEFNKKF (88 aa)) is one LWY6 repeat. The stretch at 585 to 760 (PDEKVSMTDT…TTKYMERYGQ (176 aa)) is one LWY7 repeat.

The protein belongs to the RxLR effector family. In terms of assembly, interacts with host dsRNA-binding protein DRB4.

Its subcellular location is the secreted. It is found in the host cell. Functionally, secreted effector that possesses RNA silencing suppression activity by inhibiting the biogenesis of small RNAs in the host plant to promote enhanced susceptibility of host to the pathogen during infection. Interferes with secondary siRNA production by associating with host dsRNA-binding protein DRB4. Inhibits the host salicylic acid pathway during infection. The polypeptide is RxLR effector protein PSR2 (Phytophthora infestans (strain T30-4) (Potato late blight agent)).